Reading from the N-terminus, the 389-residue chain is Succinate--CoA ligase [ADP-forming] subunit beta (389 aa).

One can recognise an ATP-grasp domain in the interval 9–236; that stretch reads KELFAKHNVP…KDATDPLELK (228 aa). Residues Lys-45, 52-54, Ser-94, and Glu-99 each bind ATP; that span reads GRG. Mg(2+) contacts are provided by Asn-191 and Asp-205. Substrate is bound by residues Asn-256 and 318–320; that span reads GIT.

The protein belongs to the succinate/malate CoA ligase beta subunit family. In terms of assembly, heterotetramer of two alpha and two beta subunits. Requires Mg(2+) as cofactor.

The catalysed reaction is succinate + ATP + CoA = succinyl-CoA + ADP + phosphate. It carries out the reaction GTP + succinate + CoA = succinyl-CoA + GDP + phosphate. Its pathway is carbohydrate metabolism; tricarboxylic acid cycle; succinate from succinyl-CoA (ligase route): step 1/1. In terms of biological role, succinyl-CoA synthetase functions in the citric acid cycle (TCA), coupling the hydrolysis of succinyl-CoA to the synthesis of either ATP or GTP and thus represents the only step of substrate-level phosphorylation in the TCA. The beta subunit provides nucleotide specificity of the enzyme and binds the substrate succinate, while the binding sites for coenzyme A and phosphate are found in the alpha subunit. The polypeptide is Succinate--CoA ligase [ADP-forming] subunit beta (Mycobacteroides abscessus (strain ATCC 19977 / DSM 44196 / CCUG 20993 / CIP 104536 / JCM 13569 / NCTC 13031 / TMC 1543 / L948) (Mycobacterium abscessus)).